The following is an 843-amino-acid chain: Neuroligin-1 (843 aa).

A signal peptide spans 1-45; it reads MALPRCMWPNYVWRAMMACVVHRGSGAPLTLCLLGCLLQTFHVLS. Topologically, residues 46 to 697 are extracellular; it reads QKLDDVDPLV…DQRDYSTELS (652 aa). N-linked (GlcNAc...) (complex) asparagine glycosylation occurs at asparagine 109. Cysteines 117 and 153 form a disulfide. The segment at 167 to 190 is disordered; that stretch reads LTKKHTDDLGDNDGAEDEDIRDSG. Acidic residues predominate over residues 175-186; the sequence is LGDNDGAEDEDI. 2 N-linked (GlcNAc...) (complex) asparagine glycosylation sites follow: asparagine 303 and asparagine 343. Cystine bridges form between cysteine 342/cysteine 353 and cysteine 512/cysteine 546. N-linked (GlcNAc...) asparagine glycosylation is present at asparagine 547. The segment at 647-688 is disordered; that stretch reads TKVPSTDITLRPTRKNSTPVTSAFPTAKQDDPKQQPSPFSVD. Polar residues predominate over residues 661-670; that stretch reads KNSTPVTSAF. 2 O-linked (GalNAc...) serine glycosylation sites follow: serine 683 and serine 686. Residues 698-718 form a helical membrane-spanning segment; sequence VTIAVGASLLFLNILAFAALY. The Cytoplasmic segment spans residues 719–843; it reads YKKDKRRHDV…HPHSHSTTRV (125 aa). Positions 822–843 are disordered; it reads GGQNNTLPHPHPHPHSHSTTRV. The span at 831–843 shows a compositional bias: basic residues; it reads PHPHPHSHSTTRV.

The protein belongs to the type-B carboxylesterase/lipase family. In terms of assembly, interacts with neurexins NRXN1, NRXN2 and NRXN3. Interaction with neurexins is mediated by heparan sulfate glycan modification on neurexin. Interacts (via its C-terminus) with DLG4/PSD-95 (via PDZ domain 3). Interacts with AIP1, GOPC and PDZRN3. Interacts with NLGN3. Brain and arteries (at protein level). Expressed in olfactory bulb. Detected in brain.

The protein localises to the cell membrane. It is found in the postsynaptic density. It localises to the synaptic cleft. Its subcellular location is the synaptic cell membrane. Its function is as follows. Cell surface protein involved in cell-cell-interactions via its interactions with neurexin family members. Plays a role in synapse function and synaptic signal transmission, and probably mediates its effects by recruiting and clustering other synaptic proteins. May promote the initial formation of synapses, but is not essential for this. In vitro, triggers the de novo formation of presynaptic structures. May be involved in specification of excitatory synapses. Required to maintain wakefulness quality and normal synchrony of cerebral cortex activity during wakefulness and sleep. The protein is involved in nervous system development. This chain is Neuroligin-1 (Nlgn1), found in Mus musculus (Mouse).